The following is a 202-amino-acid chain: Small ribosomal subunit protein uS4c (202 aa).

The 64-residue stretch at 90–153 folds into the S4 RNA-binding domain; the sequence is MRLDNVIFRL…KSEAIISKNI (64 aa).

It belongs to the universal ribosomal protein uS4 family. Part of the 30S ribosomal subunit. Contacts protein S5. The interaction surface between S4 and S5 is involved in control of translational fidelity.

Its subcellular location is the plastid. It is found in the chloroplast. Its function is as follows. One of the primary rRNA binding proteins, it binds directly to 16S rRNA where it nucleates assembly of the body of the 30S subunit. With S5 and S12 plays an important role in translational accuracy. The chain is Small ribosomal subunit protein uS4c (rps4) from Cyathophorum bulbosum (Moss).